An 882-amino-acid polypeptide reads, in one-letter code: Putative HTH-type transcriptional regulator Rv0890c (882 aa).

An HTH luxR-type domain is found at proline 814–glycine 879. The segment at residues asparagine 838–threonine 857 is a DNA-binding region (H-T-H motif).

In Mycobacterium tuberculosis (strain ATCC 25618 / H37Rv), this protein is Putative HTH-type transcriptional regulator Rv0890c.